A 209-amino-acid chain; its full sequence is Ras-like protein (209 aa).

10 to 17 is a binding site for GTP; it reads GGGLVGKS. The short motif at 55–63 is the Effector region element; sequence YDPTVEDSR. Phosphothreonine is present on T58. GTP contacts are provided by residues 79–83 and 140–143; these read DTAGQ and NKAD. A Cysteine methyl ester modification is found at C206. C206 carries S-geranylgeranyl cysteine lipidation. Residues 207–209 constitute a propeptide, removed in mature form; the sequence is LII.

The protein belongs to the small GTPase superfamily. Ras family. Post-translationally, phosphorylated in the presence of insulin.

It is found in the cell membrane. It catalyses the reaction GTP + H2O = GDP + phosphate + H(+). With respect to regulation, alternates between an inactive form bound to GDP and an active form bound to GTP. Activated by a guanine nucleotide-exchange factor (GEF) and inactivated by a GTPase-activating protein (GAP). This protein is activated by the insulin/insulin (insulin-like)-receptor system. This transition enables the ras protein to interact with the lectin-receptor/lectin complex, a process which ultimately lead to an initiation of an intra-cellular signal-transduction chain. This Geodia cydonium (Sponge) protein is Ras-like protein.